A 228-amino-acid polypeptide reads, in one-letter code: Cytidylate kinase (228 aa).

An ATP-binding site is contributed by 17-25; that stretch reads GPTASGKGT.

The protein belongs to the cytidylate kinase family. Type 1 subfamily.

The protein resides in the cytoplasm. It carries out the reaction CMP + ATP = CDP + ADP. The catalysed reaction is dCMP + ATP = dCDP + ADP. This is Cytidylate kinase from Burkholderia cenocepacia (strain HI2424).